A 546-amino-acid polypeptide reads, in one-letter code: Chaperonin GroEL 1 (546 aa).

ATP contacts are provided by residues T30–P33, K51, D87–T91, G415, N479–A481, and D495. The tract at residues K526–M546 is disordered. Gly residues predominate over residues G534–M546.

It belongs to the chaperonin (HSP60) family. As to quaternary structure, forms a cylinder of 14 subunits composed of two heptameric rings stacked back-to-back. Interacts with the co-chaperonin GroES.

It is found in the cytoplasm. The catalysed reaction is ATP + H2O + a folded polypeptide = ADP + phosphate + an unfolded polypeptide.. Its function is as follows. Together with its co-chaperonin GroES, plays an essential role in assisting protein folding. The GroEL-GroES system forms a nano-cage that allows encapsulation of the non-native substrate proteins and provides a physical environment optimized to promote and accelerate protein folding. The protein is Chaperonin GroEL 1 of Burkholderia cenocepacia (strain HI2424).